A 370-amino-acid polypeptide reads, in one-letter code: MATHKLLLLPGDGIGTEVMAEVSRLIDWLNKAGIASFETEHGLVGGAAYDADKVAITDATMALAQASDAVIFGAVGGPKWDGVPYDARPEAGLLRLRKDLGLFANLRPAVCYPALADSSSLKRDVVEGLDIMIVRELTGGVYFGEPKTITDLGNGQKRAVDTQVYDTYEIERIGRVAFDLARKRRNKVTSMEKRNVMKTGVLWNEVITAVHDREYKDVQLDHQLADSGGMNLVKWPKQFDVIVTDNLFGDMLSDIAAMLTGSLGMLPSASLGEVDAKTGKRKSMYEPVHGSAPDIAGKGMANPVAMLASFGMALRYSLDMGALADKLDEAIAAVLAKGLRTADIKSEGTTVISTSQMGEAIVTELQALHA.

77 to 90 lines the NAD(+) pocket; that stretch reads GPKWDGVPYDARPE. Arg-97, Arg-107, Arg-135, and Asp-226 together coordinate substrate. Residues Asp-226, Asp-250, and Asp-254 each contribute to the Mg(2+) site. 290 to 302 is a binding site for NAD(+); it reads GSAPDIAGKGMAN.

Belongs to the isocitrate and isopropylmalate dehydrogenases family. LeuB type 1 subfamily. Homodimer. Requires Mg(2+) as cofactor. Mn(2+) serves as cofactor.

The protein localises to the cytoplasm. The catalysed reaction is (2R,3S)-3-isopropylmalate + NAD(+) = 4-methyl-2-oxopentanoate + CO2 + NADH. It participates in amino-acid biosynthesis; L-leucine biosynthesis; L-leucine from 3-methyl-2-oxobutanoate: step 3/4. Catalyzes the oxidation of 3-carboxy-2-hydroxy-4-methylpentanoate (3-isopropylmalate) to 3-carboxy-4-methyl-2-oxopentanoate. The product decarboxylates to 4-methyl-2 oxopentanoate. The chain is 3-isopropylmalate dehydrogenase from Rhodopseudomonas palustris (strain ATCC BAA-98 / CGA009).